A 352-amino-acid polypeptide reads, in one-letter code: DNA polymerase IV (352 aa).

A UmuC domain is found at 4–185 (IIHVDMDCFF…LPLSKIPGVG (182 aa)). Mg(2+) is bound by residues Asp8 and Asp103. Residue Glu104 is part of the active site.

It belongs to the DNA polymerase type-Y family. Monomer. It depends on Mg(2+) as a cofactor.

It is found in the cytoplasm. It carries out the reaction DNA(n) + a 2'-deoxyribonucleoside 5'-triphosphate = DNA(n+1) + diphosphate. In terms of biological role, poorly processive, error-prone DNA polymerase involved in untargeted mutagenesis. Copies undamaged DNA at stalled replication forks, which arise in vivo from mismatched or misaligned primer ends. These misaligned primers can be extended by PolIV. Exhibits no 3'-5' exonuclease (proofreading) activity. May be involved in translesional synthesis, in conjunction with the beta clamp from PolIII. The polypeptide is DNA polymerase IV (Yersinia enterocolitica serotype O:8 / biotype 1B (strain NCTC 13174 / 8081)).